The primary structure comprises 1239 residues: Codanin-1 (1239 aa).

At Ala-2 the chain carries N-acetylalanine. The segment covering 61–72 (SRVLPQGPSTPA) has biased composition (polar residues). Disordered regions lie at residues 61 to 249 (SRVL…PPGC) and 261 to 299 (KART…ADPA). Residue Thr-70 is modified to Phosphothreonine. 3 stretches are compositionally biased toward low complexity: residues 77–88 (ASAALPARQGAP), 95–116 (ARSQ…PLAR), and 138–179 (GAAE…LSNL). An interaction with ASF1A/B region spans residues 193–213 (AGRTKPSRRINPTPVSEERSL). The span at 219-238 (CFTSPPISCVPSSQPSTLDT) shows a compositional bias: polar residues. Ser-270 is modified (phosphoserine). 2 consecutive transmembrane segments (helical) span residues 317–337 (CIAE…LQLL) and 631–651 (FAVV…VAFL).

Interacts with ASF1A and ASF1B. Found in a cytosolic complex with ASF1A, ASF1B, IPO4 and histones H3.1 and H4. Widely expressed in adult mice, the highest levels can be measured in erythropoietic cells.

It localises to the cytoplasm. Its subcellular location is the nucleus. It is found in the membrane. Its function is as follows. May act as a negative regulator of ASF1 in chromatin assembly. The polypeptide is Codanin-1 (Cdan1) (Mus musculus (Mouse)).